A 734-amino-acid polypeptide reads, in one-letter code: Photosystem I P700 chlorophyll a apoprotein A2 (734 aa).

8 helical membrane passes run 46–69 (IFAS…FHVA), 135–158 (LYNG…LHLQ), 175–199 (LNHH…HVAI), 273–291 (IAHH…GHMY), 330–353 (IHFQ…QHMY), 369–395 (AALY…IFFI), 417–439 (AIIS…LYVH), and 517–535 (FLVH…LILV). Residues Cys-559 and Cys-568 each contribute to the [4Fe-4S] cluster site. The next 2 membrane-spanning stretches (helical) occupy residues 575 to 596 (AFYL…YWHW) and 643 to 665 (LSVW…MFLI). 3 residues coordinate chlorophyll a: His-654, Met-662, and Tyr-670. Trp-671 contacts phylloquinone. A helical membrane pass occupies residues 707-727 (LVGLAHFSVGYIFTYAAFLIA).

Belongs to the PsaA/PsaB family. In terms of assembly, the PsaA/B heterodimer binds the P700 chlorophyll special pair and subsequent electron acceptors. PSI consists of a core antenna complex that captures photons, and an electron transfer chain that converts photonic excitation into a charge separation. The eukaryotic PSI reaction center is composed of at least 11 subunits. Requires P700 is a chlorophyll a/chlorophyll a' dimer, A0 is one or more chlorophyll a, A1 is one or both phylloquinones and FX is a shared 4Fe-4S iron-sulfur center. as cofactor.

The protein resides in the plastid. The protein localises to the chloroplast thylakoid membrane. It carries out the reaction reduced [plastocyanin] + hnu + oxidized [2Fe-2S]-[ferredoxin] = oxidized [plastocyanin] + reduced [2Fe-2S]-[ferredoxin]. Its function is as follows. PsaA and PsaB bind P700, the primary electron donor of photosystem I (PSI), as well as the electron acceptors A0, A1 and FX. PSI is a plastocyanin-ferredoxin oxidoreductase, converting photonic excitation into a charge separation, which transfers an electron from the donor P700 chlorophyll pair to the spectroscopically characterized acceptors A0, A1, FX, FA and FB in turn. Oxidized P700 is reduced on the lumenal side of the thylakoid membrane by plastocyanin. The protein is Photosystem I P700 chlorophyll a apoprotein A2 of Morus indica (Mulberry).